The sequence spans 299 residues: Glycine--tRNA ligase alpha subunit (299 aa).

This sequence belongs to the class-II aminoacyl-tRNA synthetase family. In terms of assembly, tetramer of two alpha and two beta subunits.

Its subcellular location is the cytoplasm. It catalyses the reaction tRNA(Gly) + glycine + ATP = glycyl-tRNA(Gly) + AMP + diphosphate. The polypeptide is Glycine--tRNA ligase alpha subunit (Caulobacter vibrioides (strain ATCC 19089 / CIP 103742 / CB 15) (Caulobacter crescentus)).